The following is a 385-amino-acid chain: 1-deoxy-D-xylulose 5-phosphate reductoisomerase (385 aa).

6 residues coordinate NADPH: T10, G11, S12, I13, K37, and N124. K125 contacts 1-deoxy-D-xylulose 5-phosphate. Residue E126 participates in NADPH binding. D150 contributes to the Mn(2+) binding site. S151, E152, S176, and H199 together coordinate 1-deoxy-D-xylulose 5-phosphate. E152 is a binding site for Mn(2+). G205 lines the NADPH pocket. Residues S212, N217, K218, and E221 each contribute to the 1-deoxy-D-xylulose 5-phosphate site. Residue E221 participates in Mn(2+) binding.

It belongs to the DXR family. Requires Mg(2+) as cofactor. Mn(2+) is required as a cofactor.

The enzyme catalyses 2-C-methyl-D-erythritol 4-phosphate + NADP(+) = 1-deoxy-D-xylulose 5-phosphate + NADPH + H(+). The protein operates within isoprenoid biosynthesis; isopentenyl diphosphate biosynthesis via DXP pathway; isopentenyl diphosphate from 1-deoxy-D-xylulose 5-phosphate: step 1/6. Its function is as follows. Catalyzes the NADPH-dependent rearrangement and reduction of 1-deoxy-D-xylulose-5-phosphate (DXP) to 2-C-methyl-D-erythritol 4-phosphate (MEP). This is 1-deoxy-D-xylulose 5-phosphate reductoisomerase from Clostridium botulinum (strain Langeland / NCTC 10281 / Type F).